A 378-amino-acid polypeptide reads, in one-letter code: Alanine racemase (378 aa).

Catalysis depends on Lys35, which acts as the Proton acceptor; specific for D-alanine. The residue at position 35 (Lys35) is an N6-(pyridoxal phosphate)lysine. Arg133 contributes to the substrate binding site. Tyr266 serves as the catalytic Proton acceptor; specific for L-alanine. Met314 lines the substrate pocket.

The protein belongs to the alanine racemase family. The cofactor is pyridoxal 5'-phosphate.

It catalyses the reaction L-alanine = D-alanine. Its pathway is amino-acid biosynthesis; D-alanine biosynthesis; D-alanine from L-alanine: step 1/1. Functionally, catalyzes the interconversion of L-alanine and D-alanine. May also act on other amino acids. The polypeptide is Alanine racemase (alr) (Beutenbergia cavernae (strain ATCC BAA-8 / DSM 12333 / CCUG 43141 / JCM 11478 / NBRC 16432 / NCIMB 13614 / HKI 0122)).